The following is a 375-amino-acid chain: L-asparaginase 2 (375 aa).

The first 19 residues, 1–19 (MKKQRMLVLFTALLFVFTG), serve as a signal peptide directing secretion. Residues 22-46 (HSPETKESPKEKAQTQKVSSASASE) are disordered. A compositionally biased stretch (basic and acidic residues) spans 24–35 (PETKESPKEKAQ). Residues 51–375 (PNIRILATGG…QKIQAYFNEY (325 aa)) form the Asparaginase/glutaminase domain. The O-isoaspartyl threonine intermediate role is filled by T61. Substrate is bound by residues S108 and 141 to 142 (TD).

It belongs to the asparaginase 1 family. In terms of assembly, homotetramer.

It catalyses the reaction L-asparagine + H2O = L-aspartate + NH4(+). Catalyzes the conversion of L-asparagine to L-aspartate and ammonium. This chain is L-asparaginase 2 (ansZ), found in Bacillus subtilis (strain 168).